A 78-amino-acid chain; its full sequence is Large ribosomal subunit protein bL28 (78 aa).

Belongs to the bacterial ribosomal protein bL28 family.

In Nostoc sp. (strain PCC 7120 / SAG 25.82 / UTEX 2576), this protein is Large ribosomal subunit protein bL28.